A 344-amino-acid polypeptide reads, in one-letter code: uncharacterized protein (344 aa).

A disordered region spans residues 95 to 344; it reads TINPEDANED…TPAKKNSKGR (250 aa). The segment covering 103–123 has biased composition (basic and acidic residues); it reads EDAKVKNSLKLEKEEGSDEKS. The segment covering 135–155 has biased composition (acidic residues); sequence SDDESDNSNDSEESEAEDSDQ. Over residues 191 to 200 the composition is skewed to low complexity; that stretch reads SAKNAKASKP. A compositionally biased stretch (acidic residues) spans 244 to 259; the sequence is SEDEDSGSDNSEEESE. The segment covering 265–276 has biased composition (basic residues); it reads ASSKKPPSKSSK. A compositionally biased stretch (acidic residues) spans 281–314; the sequence is EDEDEDSGQSESEHSEEESNSDEDSGQSEEESEE. Over residues 331–344 the composition is skewed to basic residues; the sequence is TAKKTPAKKNSKGR.

This is an uncharacterized protein from Acanthamoeba polyphaga (Amoeba).